Here is an 810-residue protein sequence, read N- to C-terminus: Plasminogen (810 aa).

The first 19 residues, 1–19 (MEHKEVVLLLLLFLKSGQG), serve as a signal peptide directing secretion. The PAN domain maps to 20–98 (EPLDDYVNTQ…RDVVLFEKKV (79 aa)). Disulfide bonds link C49–C73, C53–C61, C103–C181, C124–C164, C152–C176, C185–C262, C188–C316, C206–C245, C234–C257, C275–C352, C296–C335, and C324–C347. Kringle domains follow at residues 103–181 (CKTG…ILEC) and 184–262 (ECMH…IPRC). The disordered stretch occupies residues 126-145 (KWSSTSPHRPRFSPATHPSE). L-lysine is bound by residues R136, D158, and R172. Residue S268 is glycosylated (O-linked (GalNAc...) serine). Residues 275-352 (CLKGTGENYR…RWEYCKIPSC (78 aa)) form the Kringle 3 domain. N308 carries N-linked (GlcNAc...) asparagine glycosylation. Residue T365 is glycosylated (O-linked (GalNAc...) threonine). Cystine bridges form between C377–C454, C398–C437, C426–C449, C481–C560, C502–C543, C531–C555, C567–C685, C577–C585, and C607–C623. 2 Kringle domains span residues 377–454 (CYHG…LKKC) and 481–560 (CMFG…VPQC). The segment at 396–416 (KKCQSWSSMTPHRHQKTPENY) is disordered. Positions 432 and 445 each coordinate L-lysine. The region spanning 581–808 (VVGGCVAHPH…FVTWIEGVMR (228 aa)) is the Peptidase S1 domain. At S597 the chain carries Phosphoserine. Residues H622 and D665 each act as charge relay system in the active site. S688 is modified (phosphoserine). Cystine bridges form between C699–C766, C729–C745, and C756–C784. S760 functions as the Charge relay system in the catalytic mechanism.

Belongs to the peptidase S1 family. Plasminogen subfamily. Interacts (both mature PLG and the angiostatin peptide) with CSPG4 and AMOT. Interacts (via the Kringle domains) with HRG; the interaction tethers PLG to the cell surface and enhances its activation. Interacts (via Kringle 4 domain) with ADA; the interaction stimulates PLG activation when in complex with DPP4. Angiostatin: Interacts with ATP5F1A; the interaction inhibits most of the angiogenic effects of angiostatin. Interacts (plasmin) with iripin-8, a serine protease inhibitor from Ixodes ricinus saliva. Interacts (plasmin) with iripin-1, a serine protease inhibitor from Ixodes ricinus saliva. Interacts (plasmin) with Kazal-type trypsin inhibitor, a serine protease inhibitor from Aedes aegypti. As to quaternary structure, (Microbial infection) Interacts with C.albicans GPD2; the interaction is direct and provides active plasmin on the surface of fungal cells. In terms of assembly, (Microbial infection) Interacts with Staphylococcus aureus protein FnbB; this interaction provides active plasmin on the surface of bacterial cells. (Microbial infection) Interacts with P.falciparum (strain NF54) enolase ENO (via DKSLVK motif); the interaction occurs at the ookinete cell surface and is required for ookinete invasion of the mosquito midgut. As to quaternary structure, (Microbial infection) Interacts with B.burgdorferi OspC. In terms of processing, N-linked glycan contains N-acetyllactosamine and sialic acid. O-linked glycans consist of Gal-GalNAc disaccharide modified with up to 2 sialic acid residues (microheterogeneity). In the presence of the inhibitor, the activation involves only cleavage after Arg-580, yielding two chains held together by two disulfide bonds. In the absence of the inhibitor, the activation involves additionally the removal of the activation peptide. Post-translationally, (Microbial infection) The Y.pestis Pla protein cleaves between Arg-580 and Val-581, generating plasmin which facilitates bacterial migration and infection. As to expression, present in plasma and many other extracellular fluids. It is synthesized in the liver.

It is found in the secreted. The catalysed reaction is Preferential cleavage: Lys-|-Xaa &gt; Arg-|-Xaa, higher selectivity than trypsin. Converts fibrin into soluble products.. Converted into plasmin by plasminogen activators, both plasminogen and its activator being bound to fibrin. Activated with catalytic amounts of streptokinase. Plasmin activity inhibited by SERPINE2. Functionally, plasmin dissolves the fibrin of blood clots and acts as a proteolytic factor in a variety of other processes including embryonic development, tissue remodeling, tumor invasion, and inflammation. In ovulation, weakens the walls of the Graafian follicle. It activates the urokinase-type plasminogen activator, collagenases and several complement zymogens, such as C1, C4 and C5. Cleavage of fibronectin and laminin leads to cell detachment and apoptosis. Also cleaves fibrin, thrombospondin and von Willebrand factor. Its role in tissue remodeling and tumor invasion may be modulated by CSPG4. Binds to cells. In terms of biological role, angiostatin is an angiogenesis inhibitor that blocks neovascularization and growth of experimental primary and metastatic tumors in vivo. (Microbial infection) ENO/enoloase from parasite P.falciparum (strain NF54) interacts with PLG present in the mosquito blood meal to promote the invasion of the mosquito midgut by the parasite ookinete. The catalytic active form, plasmin, is essential for the invasion of the mosquito midgut. Its function is as follows. (Microbial infection) Binds to OspC on the surface of B.burgdorferi cells, possibly conferring an extracellular protease activity on the bacteria that allows it to traverse host tissue. Functionally, (Microbial infection) Interacts with dengue virus type 2 particles. Enhances dengue virus type 2 infection in Aedes aegypti mosquito midgut by increasing midgut internalization, resulting in higher infection rates and viral dissemination in mosquitoes. The chain is Plasminogen (PLG) from Homo sapiens (Human).